We begin with the raw amino-acid sequence, 464 residues long: Cytochrome P450 85A1 (464 aa).

Residues 2 to 22 form a helical membrane-spanning segment; sequence AFFLIFLSSFFGLCIFCTALL. Cys-414 provides a ligand contact to heme.

Belongs to the cytochrome P450 family. It depends on heme as a cofactor. Expressed in sub-meristematic regions of shoot and root apexes, in zones undergoing lateral root formation, in fruits, and in all flower parts, with a high expression in young flower buds and at the joint in the pedicel.

Its subcellular location is the membrane. The catalysed reaction is 6-deoxocastasterone + reduced [NADPH--hemoprotein reductase] + O2 = 6alpha-hydroxycastasterone + oxidized [NADPH--hemoprotein reductase] + H2O + H(+). It catalyses the reaction 6alpha-hydroxycastasterone + reduced [NADPH--hemoprotein reductase] + O2 = castasterone + oxidized [NADPH--hemoprotein reductase] + 2 H2O + H(+). It carries out the reaction 6-deoxocastasterone + 2 reduced [NADPH--hemoprotein reductase] + 2 O2 = castasterone + 2 oxidized [NADPH--hemoprotein reductase] + 3 H2O + 2 H(+). The protein operates within plant hormone biosynthesis; brassinosteroid biosynthesis. Functionally, catalyzes the C6-oxidation step in brassinosteroids biosynthesis. Converts 6-deoxocastasterone (6-deoxoCS) to castasterone (CS). May also convert 6-deoxoteasterone (6-deoxoTE) to teasterone (TE), 3-dehydro-6-deoxoteasterone (6-deoxo3DT, 6-deoxo3DHT) to 3-dehydroteasterone (3DT, 3-DHT), and 6-deoxotyphasterol (6-deoxoTY) to typhasterol (TY), but not castasterone (CS) to brassinolide (BL). The protein is Cytochrome P450 85A1 of Solanum lycopersicum (Tomato).